The primary structure comprises 86 residues: uncharacterized protein (86 aa).

2 TPR repeats span residues 8–41 (AEYY…NPFY) and 42–75 (RDAW…EKHL).

This is an uncharacterized protein from Methanocaldococcus jannaschii (strain ATCC 43067 / DSM 2661 / JAL-1 / JCM 10045 / NBRC 100440) (Methanococcus jannaschii).